Reading from the N-terminus, the 176-residue chain is N,N-dimethyl phenylurea N-demethylase subunit beta (176 aa).

Belongs to the bacterial ring-hydroxylating dioxygenase beta subunit family. As to quaternary structure, pdmA (subunit alpha) and PdmB (subunit beta) form the oxygenase component of a bacterial Rieske non-heme iron oxygenase (RO) system.

It carries out the reaction a 1,1-dimethyl-3-phenylurea + 2 reduced [2Fe-2S]-[ferredoxin] + O2 + 2 H(+) = a 1-methyl-3-phenylurea + formaldehyde + 2 oxidized [2Fe-2S]-[ferredoxin] + H2O. The catalysed reaction is isoproturon + 2 reduced [2Fe-2S]-[ferredoxin] + O2 + 2 H(+) = 1-methyl-3-[4-(propan-2-yl)phenyl]urea + formaldehyde + 2 oxidized [2Fe-2S]-[ferredoxin] + H2O. It catalyses the reaction chlorotoluron + 2 reduced [2Fe-2S]-[ferredoxin] + O2 + 2 H(+) = 3-(3-chloro-4-methylphenyl)-1-methylurea + formaldehyde + 2 oxidized [2Fe-2S]-[ferredoxin] + H2O. The enzyme catalyses metoxuron + 2 reduced [2Fe-2S]-[ferredoxin] + O2 + 2 H(+) = 3-(3-chloro-4-methoxylphenyl)-1-methylurea + formaldehyde + 2 oxidized [2Fe-2S]-[ferredoxin] + H2O. It carries out the reaction monuron + 2 reduced [2Fe-2S]-[ferredoxin] + O2 + 2 H(+) = 3-(4-chlorophenyl)-1-methylurea + formaldehyde + 2 oxidized [2Fe-2S]-[ferredoxin] + H2O. The catalysed reaction is diuron + 2 reduced [2Fe-2S]-[ferredoxin] + O2 + 2 H(+) = 3-(3,4-dichlorophenyl)-1-methylurea + formaldehyde + 2 oxidized [2Fe-2S]-[ferredoxin] + H2O. It catalyses the reaction fluometuron + 2 reduced [2Fe-2S]-[ferredoxin] + O2 + 2 H(+) = 3-[3-(trifluoromethyl)phenyl]-1-methylurea + formaldehyde + 2 oxidized [2Fe-2S]-[ferredoxin] + H2O. The enzyme catalyses fenuron + 2 reduced [2Fe-2S]-[ferredoxin] + O2 + 2 H(+) = 1-methyl-3-phenylurea + formaldehyde + 2 oxidized [2Fe-2S]-[ferredoxin] + H2O. It participates in xenobiotic degradation. Activity is stimulated in vitro by coexpression of a [3Fe-4S]-type ferredoxin. In terms of biological role, part of the multicomponent N,N-dimethyl phenylurea N-demethylase responsible for the initial N-demethylation step during the bacterial metabolism of N,N-dimethyl-substituted phenylurea herbicides. Catalyzes the mono-N-demethylation of N,N-dimethyl-substituted phenylurea herbicides to their mono-N-demethylated derivatives. Is active on isoproturon (IPU), chlorotoluron, metoxuron, monoron, diuron, fluometuron and fenuron, but cannot transform the N-methoxy-N-methyl-substituted herbicides. The sequence is that of N,N-dimethyl phenylurea N-demethylase subunit beta from Sphingobium sp. (strain YBL2).